The sequence spans 336 residues: 3-isopropylmalate dehydrogenase (336 aa).

Substrate is bound by residues Arg86, Arg96, Arg117, and Asp201. Asp201, Asp225, and Asp229 together coordinate Mg(2+). 258 to 270 contacts NAD(+); it reads GAAFDIAGKGIAN.

This sequence belongs to the isocitrate and isopropylmalate dehydrogenases family. In terms of assembly, homotetramer. It depends on Mg(2+) as a cofactor. Requires Mn(2+) as cofactor.

It localises to the cytoplasm. The enzyme catalyses (2R,3S)-3-isopropylmalate + NAD(+) = 4-methyl-2-oxopentanoate + CO2 + NADH. The protein operates within amino-acid biosynthesis; L-leucine biosynthesis; L-leucine from 3-methyl-2-oxobutanoate: step 3/4. Catalyzes the oxidation of 3-carboxy-2-hydroxy-4-methylpentanoate (3-isopropylmalate) to 3-carboxy-4-methyl-2-oxopentanoate. The product decarboxylates to 4-methyl-2 oxopentanoate. This Saccharolobus solfataricus (strain ATCC 35092 / DSM 1617 / JCM 11322 / P2) (Sulfolobus solfataricus) protein is 3-isopropylmalate dehydrogenase (leuB).